A 511-amino-acid polypeptide reads, in one-letter code: Inner membrane ABC transporter permease protein YnjC (511 aa).

The Cytoplasmic segment spans residues 1 to 8 (MATPLRYA). The chain crosses the membrane as a helical span at residues 9–29 (LIFLLWAMVAVIYAPLIPAAL). The Periplasmic segment spans residues 30–62 (TLISPALSLTHWQALFADPQLPQALLATLVSTT). In terms of domain architecture, ABC transmembrane type-1 1 spans 54 to 255 (LLATLVSTTI…MLLLAAYVLL (202 aa)). The chain crosses the membrane as a helical span at residues 63–83 (IAAVGALLIALLVIVALWPGP). Topologically, residues 84-91 (KWQRMCAR) are cytoplasmic. The chain crosses the membrane as a helical span at residues 92–112 (LPWLLAIPHVAFATSALLLFA). The Periplasmic portion of the chain corresponds to 113 to 130 (DGGLLYDYFPYFTPPMDR). Residues 131 to 151 (FGIGLGLTLAVKESAFLLWIL) traverse the membrane as a helical segment. Residues 152–189 (AAVLSEKWLLQQVIVLDSLGYSRWQCLNWLLLPSVAPA) lie on the Cytoplasmic side of the membrane. A helical membrane pass occupies residues 190–210 (LAMAMLAIVAWSLSVVDVAII). Residues 211–239 (LGPGNPPTLAVISWQWLTQGDIDQQTKGA) are Periplasmic-facing. A helical transmembrane segment spans residues 240–260 (LASLLLMLLLAAYVLLSYLLW). The Cytoplasmic portion of the chain corresponds to 261 to 284 (RSWRRTIPRVDGVRKPATPLLPGN). The helical transmembrane segment at 285–305 (TLAIFLPLTGVLCVVLLAILA) threads the bilayer. Over 306-318 (DQSTINSEALINS) the chain is Periplasmic. One can recognise an ABC transmembrane type-1 2 domain in the interval 315-496 (LINSLTMGLV…LLPLIIFALT (182 aa)). The chain crosses the membrane as a helical span at residues 319-339 (LTMGLVATFIALLLLLLWLEW). At 340–345 (GPQRRQ) the chain is on the cytoplasmic side. Residues 346-366 (LWLWLPILLPALPLVAGQYTL) traverse the membrane as a helical segment. At 367 to 374 (ALWLKLDG) the chain is on the periplasmic side. Residues 375 to 395 (SWTAVVWGHLLWVMPWMLFIL) traverse the membrane as a helical segment. Residues 396–432 (QPAWQRIDSRLILIAQTLGWSRAKIFFYVKCPLMLRP) lie on the Cytoplasmic side of the membrane. Residues 433–453 (VLIAFAVGFAVGIAQYMPTLW) form a helical membrane-spanning segment. The Periplasmic segment spans residues 454–485 (LGAGRFPTLTTEAVALSSGGSNGILAAQALWQ). The helical transmembrane segment at 486 to 506 (LLLPLIIFALTALVAKWVGYV) threads the bilayer. At 507–511 (RQGLR) the chain is on the cytoplasmic side.

The protein belongs to the binding-protein-dependent transport system permease family.

The protein localises to the cell inner membrane. Probably part of the binding-protein-dependent transport system YnjCD. Probably responsible for the translocation of the substrate across the membrane. The sequence is that of Inner membrane ABC transporter permease protein YnjC (ynjC) from Escherichia coli (strain K12).